A 175-amino-acid chain; its full sequence is Avenin-like a3 (175 aa).

An N-terminal signal peptide occupies residues 1–19 (MKTMFLLALLAFTATSAVA).

Belongs to the prolamin family. Contains 7 disulfide bonds.

Seed storage protein. Not integrated in the gluten polymer through disulfide bonds, unless incorporated by reduction and reoxidation during dough making. Increases dough strength and bread volume, but decreases dough stability when added into a base wheat flour. The protein is Avenin-like a3 of Triticum aestivum (Wheat).